Here is a 61-residue protein sequence, read N- to C-terminus: Putative antitoxin VapB21 (61 aa).

This sequence belongs to the UPF0165 family.

Its function is as follows. Possibly the antitoxin component of a type II toxin-antitoxin (TA) system. Its cognate toxin is VapC21 (Potential). In Archaeoglobus fulgidus (strain ATCC 49558 / DSM 4304 / JCM 9628 / NBRC 100126 / VC-16), this protein is Putative antitoxin VapB21 (vapB21).